The sequence spans 297 residues: MALNRIVLFYGFTPITDPDAVRLWQRALCEKLGLTGRILISKDGINATVGGELNAVKQYVKTTREYKGFHGIDVKWSDGGAEDFPRLSVKVRDEIVSFGAPGELKVDANGVVGGGTHLKPEELHRLVDAKKERGEEVVFFDGRNAFEAQIGKFKDAIVPDVATTHDFIKELESGKYDALKDKPVVTYCTGGIRCEVLSSLMVNRGFKEVYQLDGGIVRYGETFKDQGLWEGSLYVFDKRMHLEFSDEAKTIGECVRCSAPTSKFENCSNPSCRTLTLYCTECASSPETLRCPEGCAA.

One can recognise a Rhodanese domain in the interval 133–228 (RGEEVVFFDG…YGETFKDQGL (96 aa)). Residue Cys188 is the Cysteine persulfide intermediate of the active site.

This sequence belongs to the TrhO family.

The catalysed reaction is uridine(34) in tRNA + AH2 + O2 = 5-hydroxyuridine(34) in tRNA + A + H2O. Its function is as follows. Catalyzes oxygen-dependent 5-hydroxyuridine (ho5U) modification at position 34 in tRNAs. This Arthrobacter sp. (strain FB24) protein is tRNA uridine(34) hydroxylase.